Here is an 84-residue protein sequence, read N- to C-terminus: MNTATKLLRGGVRAYQLTLSSVLGGQCRFYPSCSAYAMEALAVHGALHGSALAARRILRCHPWNPGGVDPVPPAHHHDEMKQNG.

The protein belongs to the UPF0161 family.

The protein localises to the cell inner membrane. In terms of biological role, could be involved in insertion of integral membrane proteins into the membrane. The chain is Putative membrane protein insertion efficiency factor from Acidiphilium cryptum (strain JF-5).